A 411-amino-acid polypeptide reads, in one-letter code: Peptidase T (411 aa).

His79 is a binding site for Zn(2+). Asp81 is a catalytic residue. Residue Asp142 coordinates Zn(2+). Glu176 serves as the catalytic Proton acceptor. The Zn(2+) site is built by Glu177, Asp199, and His381.

The protein belongs to the peptidase M20B family. It depends on Zn(2+) as a cofactor.

It localises to the cytoplasm. The enzyme catalyses Release of the N-terminal residue from a tripeptide.. Functionally, cleaves the N-terminal amino acid of tripeptides. The sequence is that of Peptidase T from Geobacillus thermodenitrificans (strain NG80-2).